The sequence spans 280 residues: Shikimate dehydrogenase (NADP(+)) (280 aa).

Shikimate contacts are provided by residues 23-25 (SLS) and threonine 70. The active-site Proton acceptor is the lysine 74. Shikimate contacts are provided by asparagine 95 and aspartate 111. NADP(+) is bound by residues 135-139 (GSGGA), 158-163 (NRTISK), and isoleucine 221. Residue tyrosine 223 participates in shikimate binding. Glycine 247 lines the NADP(+) pocket.

This sequence belongs to the shikimate dehydrogenase family. Homodimer.

The enzyme catalyses shikimate + NADP(+) = 3-dehydroshikimate + NADPH + H(+). Its pathway is metabolic intermediate biosynthesis; chorismate biosynthesis; chorismate from D-erythrose 4-phosphate and phosphoenolpyruvate: step 4/7. Functionally, involved in the biosynthesis of the chorismate, which leads to the biosynthesis of aromatic amino acids. Catalyzes the reversible NADPH linked reduction of 3-dehydroshikimate (DHSA) to yield shikimate (SA). In Buchnera aphidicola subsp. Cinara cedri (strain Cc), this protein is Shikimate dehydrogenase (NADP(+)).